A 484-amino-acid polypeptide reads, in one-letter code: Endoglucanase 3 (484 aa).

Positions 1 to 21 (MASPFFFVFLLSALSLENTYA) are cleaved as a signal peptide. D77 acts as the Nucleophile in catalysis. N370 carries an N-linked (GlcNAc...) asparagine glycan. Active-site residues include H402, D453, and E462.

This sequence belongs to the glycosyl hydrolase 9 (cellulase E) family. In terms of tissue distribution, specifically expressed in root cap cells.

The protein localises to the secreted. It carries out the reaction Endohydrolysis of (1-&gt;4)-beta-D-glucosidic linkages in cellulose, lichenin and cereal beta-D-glucans.. Functionally, may be involved in the sloughing (cell-cell separation) of the root cap cells from root tip. In Arabidopsis thaliana (Mouse-ear cress), this protein is Endoglucanase 3 (CEL5).